The sequence spans 1124 residues: tRNA (34-2'-O)-methyltransferase regulator WDR6 (1124 aa).

An N-acetylmethionine modification is found at methionine 1. WD repeat units follow at residues 53–97, 105–143, 147–189, 200–238, 247–285, 289–327, 335–376, 381–422, 425–470, 476–520, 557–596, 602–640, 643–682, 743–789, 852–897, 905–950, 974–1015, 1039–1076, and 1082–1124; these read MKRV…IVKI, RELW…LYDP, CSLQ…VWYP, VPDR…IWKV, RVQN…VWSH, ILQA…LWHL, SGVF…LYDL, WEQL…VVPI, PTAA…ISAA, IFVK…LYPS, PMST…FVRG, VLRQ…VWSP, HEKL…LYRA, LIDI…VWGV, RHRH…LFLL, QLLA…FWDL, GSPC…VFVL, EEYS…FWRL, and TFMN…NWYD.

It belongs to the WD repeat WDR6 family. In terms of assembly, interacts with FTSJ1; the interaction is direct, and required for 2'-O-methylation of position 34 in substrate tRNAs. Interacts with IRS4. Interacts with STK11/LKB1.

The protein resides in the cytoplasm. Together with methyltransferase FTSJ1, methylates the 2'-O-ribose of nucleotides at position 34 of the tRNA anticodon loop of substrate tRNAs. Required for the correct positioning of the substrate tRNA for methylation. Required to suppress amino acid starvation-induced autophagy. Enhances the STK11/LKB1-induced cell growth suppression activity. In Bos taurus (Bovine), this protein is tRNA (34-2'-O)-methyltransferase regulator WDR6 (WDR6).